Here is a 355-residue protein sequence, read N- to C-terminus: Anthocyanin synthase (355 aa).

Residues Tyr-145 and Lys-216 each contribute to the substrate site. A Fe2OG dioxygenase domain is found at 211-310 (LLLQMKINYY…RISWAVFCEP (100 aa)). Position 218-220 (218-220 (NYY)) interacts with 2-oxoglutarate. His-235 is a binding site for Fe cation. Thr-236 contacts substrate. Positions 237 and 291 each coordinate Fe cation. Residues Arg-301 and 301 to 303 (RIS) each bind 2-oxoglutarate. Substrate-binding residues include Glu-309 and Lys-344.

It belongs to the iron/ascorbate-dependent oxidoreductase family. It depends on L-ascorbate as a cofactor. Requires Fe(2+) as cofactor. In terms of tissue distribution, expressed in stems and leaves. Expressed at low levels in ovaries.

The enzyme catalyses a (2R,3S,4S)-leucoanthocyanidin + 2-oxoglutarate + O2 = a 4-H-anthocyanidin with a 3-hydroxy group + succinate + CO2 + 2 H2O. Its pathway is pigment biosynthesis; anthocyanin biosynthesis. Functionally, involved in anthocyanin biosynthesis by catalyzing the oxidation of leucoanthocyanidins into anthocyanidins. Required for the accumulation of anthocyanin in red-fleshed kiwifruit varieties. This chain is Anthocyanin synthase, found in Actinidia chinensis var. chinensis (Chinese soft-hair kiwi).